Consider the following 231-residue polypeptide: Ribonuclease 3 (231 aa).

Residues 8-135 form the RNase III domain; it reads VGDLERRIGH…LMAALYQDGG (128 aa). A Mg(2+)-binding site is contributed by E48. Catalysis depends on residues D52 and E124. E124 lines the Mg(2+) pocket. The DRBM domain occupies 161–230; the sequence is DPKTALQEWA…AKALLEREGA (70 aa). A disordered region spans residues 210-231; the sequence is GKSRQEAEKAAAKALLEREGAG. Residues 212–231 are compositionally biased toward basic and acidic residues; it reads SRQEAEKAAAKALLEREGAG.

The protein belongs to the ribonuclease III family. Homodimer. Mg(2+) serves as cofactor.

It is found in the cytoplasm. The enzyme catalyses Endonucleolytic cleavage to 5'-phosphomonoester.. Digests double-stranded RNA. Involved in the processing of primary rRNA transcript to yield the immediate precursors to the large and small rRNAs (23S and 16S). Processes some mRNAs, and tRNAs when they are encoded in the rRNA operon. Processes pre-crRNA and tracrRNA of type II CRISPR loci if present in the organism. The chain is Ribonuclease 3 from Caulobacter vibrioides (strain ATCC 19089 / CIP 103742 / CB 15) (Caulobacter crescentus).